A 208-amino-acid chain; its full sequence is Large ribosomal subunit protein uL3 (208 aa).

Positions 123 to 147 (RHGQSRGPMAHGSRYHRRPGSMGPV) are disordered.

It belongs to the universal ribosomal protein uL3 family. As to quaternary structure, part of the 50S ribosomal subunit. Forms a cluster with proteins L14 and L19.

Its function is as follows. One of the primary rRNA binding proteins, it binds directly near the 3'-end of the 23S rRNA, where it nucleates assembly of the 50S subunit. The sequence is that of Large ribosomal subunit protein uL3 from Streptococcus uberis (strain ATCC BAA-854 / 0140J).